The primary structure comprises 319 residues: Acetyl esterase (319 aa).

Residues 91–93 carry the Involved in the stabilization of the negatively charged intermediate by the formation of the oxyanion hole motif; sequence HGG. Catalysis depends on residues S165, D262, and H292.

This sequence belongs to the 'GDXG' lipolytic enzyme family. Homodimer. Interacts with MalT and MelA.

Its subcellular location is the cytoplasm. Its function is as follows. Displays esterase activity towards short chain fatty esters (acyl chain length of up to 8 carbons). Able to hydrolyze triacetylglycerol (triacetin) and tributyrylglycerol (tributyrin), but not trioleylglycerol (triolein) or cholesterol oleate. Negatively regulates MalT activity by antagonizing maltotriose binding. Inhibits MelA galactosidase activity. The polypeptide is Acetyl esterase (Shigella flexneri serotype 5b (strain 8401)).